A 226-amino-acid polypeptide reads, in one-letter code: DNA mismatch repair protein MutH (226 aa).

Belongs to the MutH family.

It localises to the cytoplasm. Functionally, sequence-specific endonuclease that cleaves unmethylated GATC sequences. It is involved in DNA mismatch repair. The chain is DNA mismatch repair protein MutH from Vibrio parahaemolyticus serotype O3:K6 (strain RIMD 2210633).